Consider the following 1234-residue polypeptide: MAGARPGVHALQLEPPTVVETLRRGSKFIKWDEEASSRNLVTLRLDPNGFFLYWTGPNMEVDTLDISSIRDTRTGRYARLPKDPKIREVLGFGGPDTRLEEKLMTVVAGPDPVNTTFLNFMAVQDDTVKVWSEELFKLAMNILAQNAPEHVLRKAYTKLKLQVNQDGRIPVKNILKMFSADKKRVETALICGLNFNRSESIRPDEFSLEIFERFLNKLLLRPDIDKILLEIGAKGKPYLTLEQLMDFINQKQRDPRLNEVLYPPLRSSQARLLIEKYEPNKQFLERDQMSMEGFSRYLGGEENGILPLEALDLSMDMTQPLSAYFINSSHNTYLTAGQLAGTSSVEMYRQALLWGCRCVELDVWKGRPPEEEPFITHGFTMTTEVPLRDVLEAIAETAFKTSPYPVILSFENHVDSAKQQAKMAEYCRSIFGEALLIDPLDKYPLSAGTPLPSPQDLMGRILVKNKKRHRPSTGVPDSSVAKRPLEQSNSALSESSAATEPSSPQLGSPSSDSCPGLSNGEEVGLEKTSLEPQKSLGEEGLNRGPNVLMPDRDREDEEEDEEEEETTDPKKPTTDEGTASSEVNATEEMSTLVNYVEPVKFKSFEASRKRNKCFEMSSFVETKAMEQLTKSPMEFVEYNKQQLSRIYPKGTRVDSSNYMPQLFWNVGCQLVALNFQTLDLPMQLNAGVFEYNGRSGYLLKPEFMRRPDKSFDPFTEVIVDGIVANALRVKVISGQFLSDRKVGIYVEVDMFGLPVDTRRKYRTRTSQGNSFNPVWDEEPFDFPKVVLPTLASLRIAAFEEGGRFVGHRILPVSAIRSGYHYVCLRNEANQPLCLPALLIYTEASDYIPDDHQDYAEALINPIKHVSLMDQRAKQLAALIGESEAQASTEMCQETPSQQQGSQLSSNPVPNPLDDSPRWPPGPTTSPTSTSLSSPGQRDDLIASILSEVTPTPLEELRSHKAMVKLRSRQDRDLRELHKKHQRKAVALTRRLLDGLAQARAEGKCRPSSSALSRATNVEDVKEEEKEAARQYREFQNRQVQSLLELREAQADAETERRLEHLKQAQQRLREVVLDAHTTQFKRLKELNEREKKELQKILDRKRNNSISEAKTREKHKKEVELTEINRRHITESVNSIRRLEEAQKQRHERLLAGQQQVLQQLVEEEPKLVAQLTQECQEQRERLPQEIRRCLLGETSEGLGDGPLVACASNGHAAGSGGHQSGADSESQEENTQL.

Ala-2 is subject to N-acetylalanine. The PI-PLC X-box domain occupies 315–466; that stretch reads MDMTQPLSAY…LMGRILVKNK (152 aa). Active-site residues include His-330 and His-377. Residues 465–586 are disordered; the sequence is NKKRHRPSTG…GTASSEVNAT (122 aa). Phosphoserine is present on residues Ser-472, Ser-488, Ser-493, and Ser-535. The span at 486–513 shows a compositional bias: low complexity; sequence EQSNSALSESSAATEPSSPQLGSPSSDS. Acidic residues predominate over residues 554-566; that stretch reads REDEEEDEEEEET. Polar residues predominate over residues 577-586; sequence GTASSEVNAT. Residues 589 to 705 form the PI-PLC Y-box domain; it reads MSTLVNYVEP…GYLLKPEFMR (117 aa). The 129-residue stretch at 706-834 folds into the C2 domain; it reads RPDKSFDPFT…RNEANQPLCL (129 aa). A compositionally biased stretch (polar residues) spans 886 to 907; it reads ASTEMCQETPSQQQGSQLSSNP. Residues 886–936 are disordered; sequence ASTEMCQETPSQQQGSQLSSNPVPNPLDDSPRWPPGPTTSPTSTSLSSPGQ. Over residues 924–934 the composition is skewed to low complexity; it reads TSPTSTSLSSP. Phosphoserine is present on residues Ser-925 and Ser-1105. The disordered stretch occupies residues 1196 to 1234; the sequence is SEGLGDGPLVACASNGHAAGSGGHQSGADSESQEENTQL. The tract at residues 1231–1234 is interaction with SHANK2; the sequence is NTQL.

As to quaternary structure, interacts with LPAR2. Interacts with SHANK2. Requires Ca(2+) as cofactor. As to expression, expressed in parotid gland, brain, liver, uterus, lung, heart, adrenal gland, and ovary. Not detected in spleen, pancreas, intestine, thymus or kidney.

Its subcellular location is the cytoplasm. The protein localises to the membrane. It is found in the nucleus. It carries out the reaction a 1,2-diacyl-sn-glycero-3-phospho-(1D-myo-inositol-4,5-bisphosphate) + H2O = 1D-myo-inositol 1,4,5-trisphosphate + a 1,2-diacyl-sn-glycerol + H(+). The enzyme catalyses a 1,2-diacyl-sn-glycero-3-phospho-(1D-myo-inositol) + H2O = 1D-myo-inositol 1-phosphate + a 1,2-diacyl-sn-glycerol + H(+). With respect to regulation, activated by G(q)/G(11) G alpha proteins in response to ligand-binding to G protein-coupled receptors. In terms of biological role, catalyzes the production of the second messenger molecules diacylglycerol (DAG) and inositol 1,4,5-trisphosphate (IP3). Key transducer of G protein-coupled receptor signaling: activated by G(q)/G(11) G alpha proteins downstream of G protein-coupled receptors activation. In neutrophils, participates in a phospholipase C-activating N-formyl peptide-activated GPCR (G protein-coupled receptor) signaling pathway by promoting RASGRP4 activation by DAG, to promote neutrophil functional responses. The sequence is that of 1-phosphatidylinositol 4,5-bisphosphate phosphodiesterase beta-3 from Rattus norvegicus (Rat).